A 649-amino-acid polypeptide reads, in one-letter code: MFHLIPFVVAFLLVFLTWFLIKKLRKVIIFELDQNSKHFGGELVADVLKAHDVRFLFTLCGGHISPILVAAERQNIRVIDVRHEASAVFAADAVSRLSGTVGVAAVTAGPGLTNTVTAVKNAQMAESPIVLLAGAAAGLLRGRGSLQDIDQLSLFRPLCKWSGRVNCVKDIVPMLCKAFYLARSGTPGPVLVEFPIDTLYPYSLVRQHLRISDNPQSWRQRFTNWYLRFYLFRLFANGFRIQPCLPGQVPTQIPVEIPSIPWPSTKSIDQLVWLLSQAKRPVIVVSSQALLPPVPATQTAEHVKSLRIPVYLTGMARGLLGRHHPCVFRHARRAALRVADLIILAGSVCDFRMDYGRVLNRKAKIVIINRDKKQLYLNSDIFWRPYLAIRGDVGTALKELSISLNDRFPCLSDFRCPTEWVGELLAREHHRDEEIRQSSLTQPAERINPLSVLWQLEHNGLTDQESIIVADGGDFVGSAAYILRPRGPLSWLDPGPFGTLGVGGGFALGAKLCRPQAHVWVVYGDGSAGYSLAEWDTMARHKAPAIGVIGNDACWSQIARDQLGLFGSNVACGLQSTRYDLVGAAYAGADPLNSTLSVEDSGAFLVTEKNLDNLSDYMAHARELSDRGLPSIINCNIAASGFREGSISL.

Residues 2–21 (FHLIPFVVAFLLVFLTWFLI) form a helical membrane-spanning segment. Residue Glu-84 coordinates thiamine diphosphate. Residues 474 to 554 (DFVGSAAYIL…AIGVIGNDAC (81 aa)) are thiamine pyrophosphate binding. Positions 525 and 551 each coordinate Mg(2+).

It belongs to the TPP enzyme family. Mg(2+) serves as cofactor. It depends on thiamine diphosphate as a cofactor.

The protein localises to the endoplasmic reticulum membrane. It carries out the reaction 2-hydroxyoctadecanoyl-CoA = heptadecanal + formyl-CoA. The catalysed reaction is (2R)-hydroxyhexadecanoyl-CoA = pentadecanal + formyl-CoA. In terms of biological role, endoplasmic reticulum 2-OH acyl-CoA lyase involved in the cleavage (C1 removal) reaction in the fatty acid alpha-oxydation in a thiamine pyrophosphate (TPP)-dependent manner. Involved in the phytosphingosine degradation pathway. The sequence is that of 2-hydroxyacyl-CoA lyase 2 (ilvbl) from Xenopus laevis (African clawed frog).